Consider the following 291-residue polypeptide: Probable aquaporin PIP2-4 (291 aa).

N-acetylmethionine is present on methionine 1. Residues 1-22 (MAKDLDVNESGPPAARDYKDPP) are disordered. Alanine 2 is subject to N-acetylalanine; in Probable aquaporin PIP2-4, N-terminally processed. The Cytoplasmic portion of the chain corresponds to 2–39 (AKDLDVNESGPPAARDYKDPPPAPFFDMEELRKWPLYR). Lysine 3 is modified (N6,N6-dimethyllysine). Residues 40-60 (AVIAEFVATLLFLYVSILTVI) traverse the membrane as a helical segment. Over 61 to 74 (GYKAQTDATAGGVD) the chain is Extracellular. The helical transmembrane segment at 75 to 95 (CGGVGILGIAWAFGGMIFVLV) threads the bilayer. Residues 96–125 (YCTAGISGGHINPAVTVGLFLARKVSLVRT) are Cytoplasmic-facing. The NPA 1 motif lies at 107–109 (NPA). Residues 126–146 (VLYIVAQCLGAICGCGFVKAF) form a helical membrane-spanning segment. At 147-167 (QSSYYTRYGGGANELADGYNK) the chain is on the extracellular side. A helical transmembrane segment spans residues 168 to 188 (GTGLGAEIIGTFVLVYTVFSA). The Cytoplasmic segment spans residues 189–201 (TDPKRNARDSHVP). The chain crosses the membrane as a helical span at residues 202-222 (VLAPLPIGFAVFMVHLATIPI). The Extracellular segment spans residues 223 to 249 (TGTGINPARSFGAAVIYNNEKAWDDQW). The NPA 2 motif lies at 228 to 230 (NPA). A helical transmembrane segment spans residues 250–270 (IFWVGPMIGAAAAAFYHQFIL). Residues 271–291 (RAAAIKALGSFGSFGSFRSFA) lie on the Cytoplasmic side of the membrane. A phosphoserine mark is found at serine 283, serine 286, and serine 289.

Belongs to the MIP/aquaporin (TC 1.A.8) family. PIP (TC 1.A.8.11) subfamily. As to expression, expressed in roots.

The protein localises to the cell membrane. Functionally, aquaporins facilitate the transport of water and small neutral solutes across cell membranes. The sequence is that of Probable aquaporin PIP2-4 (PIP2-4) from Arabidopsis thaliana (Mouse-ear cress).